The sequence spans 201 residues: Large ribosomal subunit protein uL4 (201 aa).

The disordered stretch occupies residues 45–71 (AQKTRAEVTGSGKKPWRQKGTGRARAG).

Belongs to the universal ribosomal protein uL4 family. In terms of assembly, part of the 50S ribosomal subunit.

Functionally, one of the primary rRNA binding proteins, this protein initially binds near the 5'-end of the 23S rRNA. It is important during the early stages of 50S assembly. It makes multiple contacts with different domains of the 23S rRNA in the assembled 50S subunit and ribosome. Its function is as follows. Forms part of the polypeptide exit tunnel. The sequence is that of Large ribosomal subunit protein uL4 from Shewanella halifaxensis (strain HAW-EB4).